The primary structure comprises 201 residues: Probable GTP-binding protein EngB (201 aa).

The region spanning 22–197 is the EngB-type G domain; it reads RLPEYAFIGR…LDYIDSINQE (176 aa). Residues 30–37, 57–61, 75–78, 142–145, and 173–178 contribute to the GTP site; these read GRSNVGKS, GKTQL, DLPG, TKAD, and VFITSS. 2 residues coordinate Mg(2+): S37 and T59.

The protein belongs to the TRAFAC class TrmE-Era-EngA-EngB-Septin-like GTPase superfamily. EngB GTPase family. Mg(2+) is required as a cofactor.

In terms of biological role, necessary for normal cell division and for the maintenance of normal septation. The protein is Probable GTP-binding protein EngB of Porphyromonas gingivalis (strain ATCC 33277 / DSM 20709 / CIP 103683 / JCM 12257 / NCTC 11834 / 2561).